A 556-amino-acid polypeptide reads, in one-letter code: MSGDSERTVAPGVVPAPCASKVELRLSCRHLLDRDPLTKSDPSVVLLQQAQGQWLQVDRTEVVKSSLHPVFSKVFTMDYYFEEVQKLRFEVYDTHGPSGLSCQDDDFLGGMECTLGQIVAQKKMTRPLLLRFGRNAGKSTITVIAEDISGNNGYVELSFQARKLDDKDLFSKSDPFLELYRVNDDGSEQLVYRTEVVKNNLNPVWEPFKVSLNSLCSCEETRPLKCLVWDYDSRGKHDFIGDFTTTFAEMQKAFEEEQAQWDCVNAKYKQKKRNYKNSGVVILADLKLHRVHSFLDYIMGGCQIHCTVAIDFTASNGDPRNSCSLHHINPYQPNEYLRALVAVGEVCQDYDSDKRFSALGFGARIPPKYEVSHDFAINFNPEDDECEGIQGVVEAYQNCLPRVQLYGPTNVAPIISKVARMAAAEERTGEASQYYILLILTDGVVTDMSDTREAIVRASHLPMSVIIVGVGNADFTDMQILDGDDGILRSPRGEPALRDIVQFVPFRELKNASPAALAKCVLAEVPKQVVEYYSHKDLPPRSLGGQTGEAGPSSAP.

2 C2 domains span residues 1-128 (MSGD…TRPL) and 135-262 (NAGK…AQWD). Ca(2+) contacts are provided by D168, D174, D230, D232, and D238. Residues 305–504 (HCTVAIDFTA…PALRDIVQFV (200 aa)) enclose the VWFA domain. Residues 536–556 (KDLPPRSLGGQTGEAGPSSAP) form a disordered region.

This sequence belongs to the copine family. It depends on Ca(2+) as a cofactor.

The protein localises to the cytoplasm. Its subcellular location is the nucleus. It is found in the cell membrane. Calcium-dependent phospholipid-binding protein that may play a role in calcium-mediated intracellular processes. This is Copine-7 from Rattus norvegicus (Rat).